The sequence spans 569 residues: uncharacterized protein (569 aa).

A helical transmembrane segment spans residues 2 to 22 (VVIAALLGSLAVLAFLFYLWY).

It localises to the membrane. This is an uncharacterized protein from Mycoplasma pneumoniae (strain ATCC 29342 / M129 / Subtype 1) (Mycoplasmoides pneumoniae).